Consider the following 188-residue polypeptide: Peptidyl-tRNA hydrolase (188 aa).

F15 provides a ligand contact to tRNA. The active-site Proton acceptor is H20. The tRNA site is built by Y64, N66, and N112.

The protein belongs to the PTH family. In terms of assembly, monomer.

It localises to the cytoplasm. It catalyses the reaction an N-acyl-L-alpha-aminoacyl-tRNA + H2O = an N-acyl-L-amino acid + a tRNA + H(+). Hydrolyzes ribosome-free peptidyl-tRNAs (with 1 or more amino acids incorporated), which drop off the ribosome during protein synthesis, or as a result of ribosome stalling. Functionally, catalyzes the release of premature peptidyl moieties from peptidyl-tRNA molecules trapped in stalled 50S ribosomal subunits, and thus maintains levels of free tRNAs and 50S ribosomes. The polypeptide is Peptidyl-tRNA hydrolase (Borrelia turicatae (strain 91E135)).